We begin with the raw amino-acid sequence, 321 residues long: Glucokinase (321 aa).

8 to 13 contributes to the ATP binding site; sequence ADIGGT.

The protein belongs to the bacterial glucokinase family.

Its subcellular location is the cytoplasm. The enzyme catalyses D-glucose + ATP = D-glucose 6-phosphate + ADP + H(+). The protein is Glucokinase of Photorhabdus laumondii subsp. laumondii (strain DSM 15139 / CIP 105565 / TT01) (Photorhabdus luminescens subsp. laumondii).